Consider the following 540-residue polypeptide: Putative F-box/LRR-repeat protein At5g41840 (540 aa).

The F-box domain maps to 13-61 (GDRISGLPDALICHILSFLPTKEAASTTVLAKRWKPLLAFVPNLNFDDS). 7 LRR repeats span residues 80–105 (FMSFVDSVLALQAKTKTPLKRFHVKC), 137–165 (RNYCENSSFYSLPSKIFVSKTLVRLKIQF), 189–214 (YFKIETSMLNKLLSGCHALEELVLAN), 217–242 (WADSSEDEACHVSVSIPTLKRLNFCR), 254–282 (YEDYDEENINEGVSLSFDNPNLVYLEYSD), 329–360 (ILYLSDDTLEVLSCCRERIPVFDNLLELTIKT), and 361–386 (TPYVGWKSLPPLLKSCPSLETLVFEG).

The sequence is that of Putative F-box/LRR-repeat protein At5g41840 from Arabidopsis thaliana (Mouse-ear cress).